A 639-amino-acid chain; its full sequence is Muscarinic acetylcholine receptor M3 (639 aa).

Topologically, residues Met-1–Gln-115 are extracellular. N-linked (GlcNAc...) asparagine glycosylation is found at Asn-16, Asn-44, Asn-45, Asn-54, Asn-97, and Asn-101. A helical membrane pass occupies residues Val-116 to Val-139. At Ser-140–Asn-152 the chain is on the cytoplasmic side. A helical membrane pass occupies residues Tyr-153–Phe-173. The Extracellular portion of the chain corresponds to Thr-174–Asp-190. Cys-189 and Cys-269 are joined by a disulfide. A helical membrane pass occupies residues Leu-191–Phe-212. Residues Asp-213–Arg-232 lie on the Cytoplasmic side of the membrane. The helical transmembrane segment at Ala-233–Trp-255 threads the bilayer. The Extracellular segment spans residues Gln-256–Pro-277. A helical transmembrane segment spans residues Ile-278–Trp-300. The Cytoplasmic portion of the chain corresponds to Arg-301–Thr-542. Disordered stretches follow at residues Pro-370–Asp-404 and Leu-431–Phe-471. Positions Ser-382–Ser-393 are enriched in low complexity. The span at Glu-443–Lys-454 shows a compositional bias: basic and acidic residues. Residues Leu-543–Val-563 form a helical membrane-spanning segment. At Asn-564 to Asn-576 the chain is on the extracellular side. Residues Leu-577–Cys-596 traverse the membrane as a helical segment. Topologically, residues Asn-597–Ser-639 are cytoplasmic.

This sequence belongs to the G-protein coupled receptor 1 family. Muscarinic acetylcholine receptor subfamily. CHRM3 sub-subfamily. In terms of tissue distribution, brain, heart atria, and ventricle.

It is found in the cell membrane. The protein localises to the postsynaptic cell membrane. In terms of biological role, the muscarinic acetylcholine receptor mediates various cellular responses, including inhibition of adenylate cyclase, breakdown of phosphoinositides and modulation of potassium channels through the action of G proteins. Primary transducing effect is Pi turnover. In Gallus gallus (Chicken), this protein is Muscarinic acetylcholine receptor M3 (CHRM3).